The following is a 179-amino-acid chain: ADP-ribosylation factor-like protein 5A (179 aa).

Gly-2 carries N-myristoyl glycine lipidation. Residues Gly-23–Thr-30, Asp-66–Gln-70, Asn-125–Asp-128, and Ala-159 contribute to the GTP site.

Belongs to the small GTPase superfamily. Arf family.

In terms of biological role, lacks ADP-ribosylation enhancing activity. This is ADP-ribosylation factor-like protein 5A (Arl5a) from Mus musculus (Mouse).